The primary structure comprises 867 residues: Retinoblastoma-related protein 1 (867 aa).

The segment at 275–476 is domain A; it reads TPVTSAMTTA…EKGSSLYNSL (202 aa). Residues 275–722 form a pocket; binds RPD3I and RBAP1 region; it reads TPVTSAMTTA…NEVFVPAAKP (448 aa). Residues 477–594 are spacer; that stretch reads IVARPSVASE…PVGGNEKCAD (118 aa). The segment at 512 to 563 is disordered; the sequence is EGLPATPSKKRAAGPDDNADPRSPKRSCNESRNTVVERNLQTPPPKQSHMVS. Basic and acidic residues predominate over residues 530–540; that stretch reads ADPRSPKRSCN. The span at 541–552 shows a compositional bias: polar residues; it reads ESRNTVVERNLQ. Positions 595–722 are domain B; that stretch reads VTIHIFFSKI…NEVFVPAAKP (128 aa). Disordered stretches follow at residues 734-762 and 843-867; these read PEDK…MSPK and QING…ETDT.

Belongs to the retinoblastoma protein (RB) family. Interacts with RPD3I, RBAP1, the Arabidopsis cyclin CYCD3-1, the mastrevirus replication-associated protein A (RepA) and the begomovirus replication-associated protein (Rep). Ubiquitous.

It localises to the nucleus. Regulator of biological processes that recruits a histone deacetylase to control gene transcription. May play a role in the entry into mitosis, negatively regulating the cell proliferation. Formation of stable complexes with geminiviridae replication-associated proteins may create a cellular environment which favors viral DNA replication. In Zea mays (Maize), this protein is Retinoblastoma-related protein 1 (RBR1).